The sequence spans 945 residues: Leucine--tRNA ligase (945 aa).

Residues 43-53 (PYPNGAIHIGH) carry the 'HIGH' region motif. The 'KMSKS' region signature appears at 638 to 642 (KMSKS). Lys641 is an ATP binding site.

It belongs to the class-I aminoacyl-tRNA synthetase family.

The protein localises to the cytoplasm. It carries out the reaction tRNA(Leu) + L-leucine + ATP = L-leucyl-tRNA(Leu) + AMP + diphosphate. The chain is Leucine--tRNA ligase from Pyrobaculum arsenaticum (strain DSM 13514 / JCM 11321 / PZ6).